Here is a 122-residue protein sequence, read N- to C-terminus: MSITKDQILEAFAEMSVMEVVELIEAMEEKFGVSAAAAVVAGGAEGGAAAAEQTEFDVMMTSFGANKVAVIKALRGATGLGLKEAKAMAESAPVAVKEGLEKAEAEALKAELEAAGAEVEIK.

Belongs to the bacterial ribosomal protein bL12 family. As to quaternary structure, homodimer. Part of the ribosomal stalk of the 50S ribosomal subunit. Forms a multimeric L10(L12)X complex, where L10 forms an elongated spine to which 2 to 4 L12 dimers bind in a sequential fashion. Binds GTP-bound translation factors.

Functionally, forms part of the ribosomal stalk which helps the ribosome interact with GTP-bound translation factors. Is thus essential for accurate translation. This chain is Large ribosomal subunit protein bL12, found in Shewanella woodyi (strain ATCC 51908 / MS32).